We begin with the raw amino-acid sequence, 342 residues long: Apurinic-apyrimidinic endonuclease 1 (342 aa).

Zn(2+) is bound by residues His61, Glu136, Asp170, His173, His207, Asp220, His222, and Glu252. Basic and acidic residues predominate over residues 299–310 (HLNKFEKKEAKK). Residues 299–342 (HLNKFEKKEAKKDRKKKSKDGDQTTLLLRKKQKLGNAEVKSLDE) are disordered.

It belongs to the AP endonuclease 2 family. Zn(2+) is required as a cofactor.

It localises to the nucleus. Functionally, DNA repair enzyme that cleaves apurinic/apyrimidinic (AP) sites and removes 3'-blocking groups present at single strand breaks of damaged DNA. Provides back-up AP endonuclease (APE) activity to apn2 together with uve1. The sequence is that of Apurinic-apyrimidinic endonuclease 1 (apn1) from Schizosaccharomyces pombe (strain 972 / ATCC 24843) (Fission yeast).